We begin with the raw amino-acid sequence, 177 residues long: Adenylyl-sulfate kinase (177 aa).

12-19 (GLSGAGKT) is a binding site for ATP. S86 functions as the Phosphoserine intermediate in the catalytic mechanism.

The protein belongs to the APS kinase family.

The catalysed reaction is adenosine 5'-phosphosulfate + ATP = 3'-phosphoadenylyl sulfate + ADP + H(+). Its pathway is sulfur metabolism; hydrogen sulfide biosynthesis; sulfite from sulfate: step 2/3. Its function is as follows. Catalyzes the synthesis of activated sulfate. In Picosynechococcus sp. (strain ATCC 27264 / PCC 7002 / PR-6) (Agmenellum quadruplicatum), this protein is Adenylyl-sulfate kinase.